A 155-amino-acid chain; its full sequence is Endoribonuclease YbeY (155 aa).

Positions 114, 118, and 124 each coordinate Zn(2+).

It belongs to the endoribonuclease YbeY family. Requires Zn(2+) as cofactor.

It localises to the cytoplasm. Functionally, single strand-specific metallo-endoribonuclease involved in late-stage 70S ribosome quality control and in maturation of the 3' terminus of the 16S rRNA. In Escherichia coli O1:K1 / APEC, this protein is Endoribonuclease YbeY.